The following is a 56-amino-acid chain: Ovomucoid (56 aa).

In terms of domain architecture, Kazal-like spans 6–56; that stretch reads VDCSEYPKPACMSEYRPLCGSDNKTYVNKCNFCNAVVESNGTLTLSHFGKC. Cystine bridges form between C8/C38, C16/C35, and C24/C56. N-linked (GlcNAc...) asparagine glycosylation occurs at N45.

It is found in the secreted. The sequence is that of Ovomucoid from Colinus virginianus (Northern bobwhite).